We begin with the raw amino-acid sequence, 194 residues long: CASP-like protein 1D1 (194 aa).

The segment covering M1–T16 has biased composition (basic and acidic residues). The interval M1 to T23 is disordered. Residues M1 to Q31 lie on the Cytoplasmic side of the membrane. A helical membrane pass occupies residues V32–S52. At K53–A77 the chain is on the extracellular side. A helical membrane pass occupies residues L78–V98. Residues T99 to S109 lie on the Cytoplasmic side of the membrane. Residues A110–A130 traverse the membrane as a helical segment. Topologically, residues T131 to H163 are extracellular. The helical transmembrane segment at V164 to I184 threads the bilayer. The Cytoplasmic portion of the chain corresponds to S185 to R194.

This sequence belongs to the Casparian strip membrane proteins (CASP) family. Homodimer and heterodimers.

It localises to the cell membrane. In Arabidopsis lyrata subsp. lyrata (Lyre-leaved rock-cress), this protein is CASP-like protein 1D1.